Reading from the N-terminus, the 301-residue chain is Aquaporin NIP2-3 (301 aa).

2 helical membrane passes run 57-77 and 91-111; these read VISE…AASI and SVAG…ISGA. The NPA 1 motif lies at 114–116; sequence NPA. Transmembrane regions (helical) follow at residues 132 to 154, 172 to 192, and 200 to 220; these read VPFY…KAVL, ALAI…AVAT, and LAGL…GPVS. The NPA 2 signature appears at 225-227; that stretch reads NPA. A helical membrane pass occupies residues 238–258; that stretch reads VFTGLWIYFLGPVVGTLSGAW.

The protein belongs to the MIP/aquaporin (TC 1.A.8) family. NIP (TC 1.A.8.12) subfamily.

The protein resides in the membrane. Its function is as follows. Aquaporins facilitate the transport of water and small neutral solutes across cell membranes. This is Aquaporin NIP2-3 (NIP2-3) from Zea mays (Maize).